The primary structure comprises 186 residues: MSEGIDIKELKRRMDGAVSAFKSDIASLRTGRASANILDPVTIEAYGSRVPLNQVANITVPEPRMLTVSVWDKSMVSAVERGIRESNLGLNPIVDGQSLRIPLPELNEERRKSLVKVAHDYAEKSKVAIRHVRRDGMDGLKKAEKDGVIGQDESRAQSERVQKMTDETISEIDRLLGEKEKEIMQV.

Residues 144-163 form a disordered region; sequence EKDGVIGQDESRAQSERVQK.

The protein belongs to the RRF family.

It is found in the cytoplasm. Functionally, responsible for the release of ribosomes from messenger RNA at the termination of protein biosynthesis. May increase the efficiency of translation by recycling ribosomes from one round of translation to another. The chain is Ribosome-recycling factor from Rhizobium etli (strain CIAT 652).